We begin with the raw amino-acid sequence, 442 residues long: Histidinol dehydrogenase (442 aa).

Tyr138, Gln196, and Asn219 together coordinate NAD(+). Positions 245, 267, and 270 each coordinate substrate. Zn(2+)-binding residues include Gln267 and His270. Catalysis depends on proton acceptor residues Glu334 and His335. 4 residues coordinate substrate: His335, Asp368, Glu422, and His427. Asp368 is a binding site for Zn(2+). His427 serves as a coordination point for Zn(2+).

This sequence belongs to the histidinol dehydrogenase family. Homodimer. Zn(2+) serves as cofactor.

The enzyme catalyses L-histidinol + 2 NAD(+) + H2O = L-histidine + 2 NADH + 3 H(+). Its pathway is amino-acid biosynthesis; L-histidine biosynthesis; L-histidine from 5-phospho-alpha-D-ribose 1-diphosphate: step 9/9. Catalyzes the sequential NAD-dependent oxidations of L-histidinol to L-histidinaldehyde and then to L-histidine. The sequence is that of Histidinol dehydrogenase from Pectobacterium atrosepticum (strain SCRI 1043 / ATCC BAA-672) (Erwinia carotovora subsp. atroseptica).